A 655-amino-acid chain; its full sequence is p-hydroxybenzoic acid efflux pump subunit AaeB (655 aa).

A run of 11 helical transmembrane segments spans residues 13-33 (FAVKLATAIVLALFVGFHFQL), 38-58 (WAVLTAAIVAAGPAFAAGGEP), 67-89 (GFLRIIGTFIGCIAGLVIIIAMI), 93-112 (LLMILVCCIWAGFCTWISSL), 121-141 (WGLAGYTALIIVITIQPEPLL), 152-172 (EIVIGIVCAIMADLLFSPRSI), 370-390 (LFWLWTGWTSGSGAMVMIAVV), 407-427 (FIYGTLAALPLGLLYFLVIIP), 431-451 (QSMLLLCISLAVLGFFLGIEV), 459-479 (MGALASTINIIVLDNPMTFHF), and 482-502 (FLDSALGQIVGCVLAFTVILL).

This sequence belongs to the aromatic acid exporter ArAE (TC 2.A.85) family.

The protein resides in the cell inner membrane. Forms an efflux pump with AaeA. Could function as a metabolic relief valve, allowing to eliminate certain compounds when they accumulate to high levels in the cell. The sequence is that of p-hydroxybenzoic acid efflux pump subunit AaeB from Escherichia coli O9:H4 (strain HS).